Here is a 426-residue protein sequence, read N- to C-terminus: Mothers against decapentaplegic homolog 7 (426 aa).

The tract at residues 14-42 is disordered; that stretch reads WRSRAPGGEDEEEGVGGGGGGGELRGEGA. N6-acetyllysine; alternate is present on residues K64 and K70. Residues K64 and K70 each participate in a glycyl lysine isopeptide (Lys-Gly) (interchain with G-Cter in ubiquitin); alternate cross-link. The 144-residue stretch at 64–207 folds into the MH1 domain; it reads KAVRGAKGHH…LSRLCELESP (144 aa). Residues 67–76 are compositionally biased toward basic residues; it reads RGAKGHHHPH. Residues 67–87 are disordered; that stretch reads RGAKGHHHPHPPTSGAGAAGG. Zn(2+)-binding residues include C125, C180, C192, and H197. Positions 208–211 match the PY-motif motif; it reads PPPY. The interval 208–217 is important for interaction with SMURF2; it reads PPPYSRYPMD. Position 249 is a phosphoserine (S249). In terms of domain architecture, MH2 spans 261–426; that stretch reads WCVVAYWEEK…CWLEVIFNSR (166 aa).

Belongs to the dwarfin/SMAD family. As to quaternary structure, interacts with COPS5. Interacts with STAMBP. Interacts with PPP1R15A. Interacts with NEDD4L. Interacts with RNF111, AXIN1 and AXIN2. Interacts with ACVR1B, SMURF1, SMURF2 and TGFBR1; SMAD7 recruits SMURF1 and SMURF2 to the TGF-beta receptor and regulates its degradation. Interacts with WWP1. Interacts with PDPK1 (via PH domain). Ubiquitinated by WWP1. Interacts with TSC22D1/TSC-22; the interaction requires TGF-beta and the interaction is inhibited by TGFBR1. Phosphorylation on Ser-249 does not affect its stability, nuclear localization or inhibitory function in TGFB signaling; however it affects its ability to regulate transcription. Phosphorylated by PDPK1. Post-translationally, ubiquitinated by WWP1. Polyubiquitinated by RNF111, which is enhanced by AXIN1 and promotes proteasomal degradation. In response to TGF-beta, ubiquitinated by SMURF1; which promotes its degradation. Ubiquitinated by ARK2C, promoting proteasomal degradation, leading to enhance the BMP-Smad signaling. In terms of processing, acetylation prevents ubiquitination and degradation mediated by SMURF1. Ubiquitous in various organs, with higher levels in brain and kidney.

It localises to the nucleus. The protein localises to the cytoplasm. Functionally, antagonist of signaling by TGF-beta (transforming growth factor) type 1 receptor superfamily members; has been shown to inhibit TGF-beta (Transforming growth factor) and activin signaling by associating with their receptors thus preventing SMAD2 access. Functions as an adapter to recruit SMURF2 to the TGF-beta receptor complex. Also acts by recruiting the PPP1R15A-PP1 complex to TGFBR1, which promotes its dephosphorylation. Positively regulates PDPK1 kinase activity by stimulating its dissociation from the 14-3-3 protein YWHAQ which acts as a negative regulator. The polypeptide is Mothers against decapentaplegic homolog 7 (Smad7) (Mus musculus (Mouse)).